A 636-amino-acid polypeptide reads, in one-letter code: Nuclear receptor subfamily 2 group C member 1 (636 aa).

Positions 149 to 224 form a DNA-binding region, nuclear receptor; sequence VELCVVCGDK…LGMKQDSVQC (76 aa). 2 NR C4-type zinc fingers span residues 152-172 and 188-207; these read CVVCGDKASGRHYGAVTCEGC and CRGSKDCVINKHYRNRCQYC. The region spanning 382-623 is the NR LBD domain; it reads ECVGSNSNLT…SIIPYILRME (242 aa).

This sequence belongs to the nuclear hormone receptor family. NR2 subfamily.

It localises to the nucleus. Its function is as follows. Orphan nuclear receptor. Binds the IR7 element in the promoter of its own gene in an autoregulatory negative feedback mechanism. Primarily repressor of a broad range of genes. Binds to hormone response elements (HREs) consisting of two 5'-AGGTCA-3' half site direct repeat consensus sequences. This chain is Nuclear receptor subfamily 2 group C member 1, found in Xenopus tropicalis (Western clawed frog).